We begin with the raw amino-acid sequence, 372 residues long: MKLTIERAALLKALGHVQSVVERRNTIPILSNILLSAEGDRLSFSATDLDMEIIDEGFAQIDVPGQITAPAHTLYEIVRKLPDGADVSLSFSGDDPRLVIQAGRSRFNLPVLPAGDFPVMSSDGLSSRIAVDTNELIRLIDKTRFAISTEETRYYLNGLYVHTVNEGGETKLRAVATDGHRLALAEMPAPEGAVGIPGVIVPRKTIAEARRLMESAGETVDLQVSPQKVRFEFGAAALTSKVIDGAFPDYMRVIPRDNAKILTLDNDLFAKAVDRVATISAEKSRSVKLAVEPGRITLTVRNMEAGQAVEEVEVDYDGEPFEIGFNARYLLDVCGQIAGPQAEFRFADPASPTLVVDPVDPGVKYVLMPLRV.

Belongs to the beta sliding clamp family. In terms of assembly, forms a ring-shaped head-to-tail homodimer around DNA which binds and tethers DNA polymerases and other proteins to the DNA. The DNA replisome complex has a single clamp-loading complex (3 tau and 1 each of delta, delta', psi and chi subunits) which binds 3 Pol III cores (1 core on the leading strand and 2 on the lagging strand) each with a beta sliding clamp dimer. Additional proteins in the replisome are other copies of gamma, psi and chi, Ssb, DNA helicase and RNA primase.

The protein resides in the cytoplasm. In terms of biological role, confers DNA tethering and processivity to DNA polymerases and other proteins. Acts as a clamp, forming a ring around DNA (a reaction catalyzed by the clamp-loading complex) which diffuses in an ATP-independent manner freely and bidirectionally along dsDNA. Initially characterized for its ability to contact the catalytic subunit of DNA polymerase III (Pol III), a complex, multichain enzyme responsible for most of the replicative synthesis in bacteria; Pol III exhibits 3'-5' exonuclease proofreading activity. The beta chain is required for initiation of replication as well as for processivity of DNA replication. This is Beta sliding clamp (dnaN) from Caulobacter vibrioides (strain ATCC 19089 / CIP 103742 / CB 15) (Caulobacter crescentus).